The chain runs to 231 residues: GTP cyclohydrolase III (231 aa).

It belongs to the archaeal-type GTP cyclohydrolase family.

It catalyses the reaction GTP + 3 H2O = 2-amino-5-formylamino-6-(5-phospho-D-ribosylamino)pyrimidin-4(3H)-one + 2 phosphate + 2 H(+). Functionally, catalyzes the formation of 2-amino-5-formylamino-6-ribofuranosylamino-4(3H)-pyrimidinone ribonucleotide monophosphate and inorganic phosphate from GTP. Also has an independent pyrophosphate phosphohydrolase activity. The chain is GTP cyclohydrolase III from Saccharolobus solfataricus (strain ATCC 35092 / DSM 1617 / JCM 11322 / P2) (Sulfolobus solfataricus).